Reading from the N-terminus, the 385-residue chain is Mannitol-1-phosphate 5-dehydrogenase (385 aa).

3–14 is a binding site for NAD(+); sequence ALQFGAGNIGRG.

This sequence belongs to the mannitol dehydrogenase family.

It carries out the reaction D-mannitol 1-phosphate + NAD(+) = beta-D-fructose 6-phosphate + NADH + H(+). This Buchnera aphidicola subsp. Acyrthosiphon pisum (strain APS) (Acyrthosiphon pisum symbiotic bacterium) protein is Mannitol-1-phosphate 5-dehydrogenase (mtlD).